We begin with the raw amino-acid sequence, 672 residues long: MSKTFKLHSAFQPSGDQPEAIRRLEEGLEDGLAHQTLLGVTGSGKTFTIANVIADLNRPTMVMAPNKTLAAQLYGEMKQFFPENAVEYFVSYYDYYQPEAYVPSSDTFIEKDASVNEHIEQMRLSATKALLERRDVVVVASVSAIYGLGDPDLYLKMMLHLTQGMLIDQRSILRRLSELQYVRNDQAFARGTFRVRGEVIDIFPAEADDEALRVELFDDEVERLSLFDPLTGQLLRTVPRFTVYPKTHYVTPRERILQAMEAIRAELAMRRQSLLASNKLLEEQRLAQRTQFDLEMMNELGYCSGIENYSRYLSGRGPGEPPPTLFDYLPADGLLVIDESHVTIPQIGGMYRGDRARKETLVEYGFRLPSALDNRPLRFEEFEALAPQTIYVSATPGNYELDKSGGEVIDQVVRPTGLLDPLIEVRPVATQVDDLLSEINLRAAIGERVLVTTLTKRMAEDLTEYLEEHGVRVRYLHSDIDTVERMEIIRDLRLGEFDALVGINLLREGLDMPEVSLVAILDADKEGFLRSERSLIQTIGRAARNLNGKAILYADKITPSMARAIGETERRRERQQAFNLAHGITPQALNKKVTDILQLGDGPVRSRTKGARGQRAAEPHPDYHTLSAKQIEQQIQRLETQMYQHAQNLEFEQAAALRDEIHILREQFKNAS.

The Helicase ATP-binding domain maps to 26 to 183; the sequence is EGLEDGLAHQ…RRLSELQYVR (158 aa). Residue 39-46 participates in ATP binding; it reads GVTGSGKT. The Beta-hairpin signature appears at 92–115; the sequence is YYDYYQPEAYVPSSDTFIEKDASV. Residues 431-597 enclose the Helicase C-terminal domain; sequence QVDDLLSEIN…ALNKKVTDIL (167 aa). The tract at residues 601–623 is disordered; the sequence is DGPVRSRTKGARGQRAAEPHPDY. Residues 632–667 form the UVR domain; the sequence is EQQIQRLETQMYQHAQNLEFEQAAALRDEIHILREQ.

This sequence belongs to the UvrB family. In terms of assembly, forms a heterotetramer with UvrA during the search for lesions. Interacts with UvrC in an incision complex.

Its subcellular location is the cytoplasm. In terms of biological role, the UvrABC repair system catalyzes the recognition and processing of DNA lesions. A damage recognition complex composed of 2 UvrA and 2 UvrB subunits scans DNA for abnormalities. Upon binding of the UvrA(2)B(2) complex to a putative damaged site, the DNA wraps around one UvrB monomer. DNA wrap is dependent on ATP binding by UvrB and probably causes local melting of the DNA helix, facilitating insertion of UvrB beta-hairpin between the DNA strands. Then UvrB probes one DNA strand for the presence of a lesion. If a lesion is found the UvrA subunits dissociate and the UvrB-DNA preincision complex is formed. This complex is subsequently bound by UvrC and the second UvrB is released. If no lesion is found, the DNA wraps around the other UvrB subunit that will check the other stand for damage. This Edwardsiella ictaluri (strain 93-146) protein is UvrABC system protein B.